The primary structure comprises 76 residues: Small ribosomal subunit protein bS18 (76 aa).

This sequence belongs to the bacterial ribosomal protein bS18 family. Part of the 30S ribosomal subunit. Forms a tight heterodimer with protein bS6.

Its function is as follows. Binds as a heterodimer with protein bS6 to the central domain of the 16S rRNA, where it helps stabilize the platform of the 30S subunit. The sequence is that of Small ribosomal subunit protein bS18 from Stutzerimonas stutzeri (strain A1501) (Pseudomonas stutzeri).